Consider the following 131-residue polypeptide: MALMTWTAAEFGTNVGFADDQHKTIFDMVNKLHDTAATGNRSEIGKQLDALIDYVVMHFKSEETEMQKKGYADFAAHKAEHDKLVGVCADLQKKFHAGEAEVNQDTTRFVRDWLVNHIPKVDKLYGPCLSA.

Histidine 22, histidine 58, glutamate 62, histidine 77, histidine 81, histidine 117, and aspartate 122 together coordinate Fe cation.

This sequence belongs to the hemerythrin family. As to quaternary structure, monomer.

Functionally, oxygen-binding protein. May be involved in a storage mechanism or for delivery to oxygen-requiring enzymes. The oxygen-binding site contains two iron atoms. In Methylococcus capsulatus (strain ATCC 33009 / NCIMB 11132 / Bath), this protein is Bacteriohemerythrin.